A 484-amino-acid chain; its full sequence is Ribosome biogenesis protein YTM1 (484 aa).

The segment at 13–95 (VKVTFTTTEA…ESNLTLQYVR (83 aa)) is ubiquitin-like (UBL) domain. WD repeat units lie at residues 122–161 (SPSGRWSGDNFQRGQDRILSASFDGLLRIWNASGQVIATS), 168–206 (GHTASIKAAKFLTNSQLASAGMDRTVRVWKYTESDHFSG), 216–255 (GHTGSIDSLEVDGASKRILTASADGSIGFWSTSKASAPEA), 288–328 (IHSA…VVTT), 330–373 (STSH…ATTS), 379–419 (GHAN…PATQ), and 448–484 (GEGCKVFGVVWDAELGIVSGAEDKRVQINAGRDVVAE).

The protein belongs to the WD repeat WDR12/YTM1 family. As to quaternary structure, component of the NOP7 complex, composed of ERB1, NOP7 and YTM1. The complex is held together by ERB1, which interacts with NOP7 via its N-terminal domain and with YTM1 via a high-affinity interaction between the seven-bladed beta-propeller domains of the 2 proteins. The NOP7 complex associates with the 66S pre-ribosome. Interacts (via UBL domain) with MDN1 (via VWFA/MIDAS domain).

It is found in the nucleus. Its subcellular location is the nucleolus. It localises to the nucleoplasm. Component of the NOP7 complex, which is required for maturation of the 25S and 5.8S ribosomal RNAs and formation of the 60S ribosome. The polypeptide is Ribosome biogenesis protein YTM1 (Chaetomium globosum (strain ATCC 6205 / CBS 148.51 / DSM 1962 / NBRC 6347 / NRRL 1970) (Soil fungus)).